A 126-amino-acid polypeptide reads, in one-letter code: Holo-[acyl-carrier-protein] synthase (126 aa).

2 residues coordinate Mg(2+): D9 and E58.

The protein belongs to the P-Pant transferase superfamily. AcpS family. Requires Mg(2+) as cofactor.

It localises to the cytoplasm. It catalyses the reaction apo-[ACP] + CoA = holo-[ACP] + adenosine 3',5'-bisphosphate + H(+). Transfers the 4'-phosphopantetheine moiety from coenzyme A to a Ser of acyl-carrier-protein. This Escherichia fergusonii (strain ATCC 35469 / DSM 13698 / CCUG 18766 / IAM 14443 / JCM 21226 / LMG 7866 / NBRC 102419 / NCTC 12128 / CDC 0568-73) protein is Holo-[acyl-carrier-protein] synthase.